The chain runs to 81 residues: Large ribosomal subunit protein bL27 (81 aa).

A compositionally biased stretch (polar residues) spans M1 to K11. The segment at M1 to L21 is disordered.

Belongs to the bacterial ribosomal protein bL27 family.

The protein is Large ribosomal subunit protein bL27 of Borrelia hermsii (strain HS1 / DAH).